A 490-amino-acid chain; its full sequence is Probable cytosol aminopeptidase (490 aa).

Positions 262 and 267 each coordinate Mn(2+). Lys274 is an active-site residue. Mn(2+)-binding residues include Asp285, Asp344, and Glu346. Arg348 is a catalytic residue.

This sequence belongs to the peptidase M17 family. Requires Mn(2+) as cofactor.

It localises to the cytoplasm. It carries out the reaction Release of an N-terminal amino acid, Xaa-|-Yaa-, in which Xaa is preferably Leu, but may be other amino acids including Pro although not Arg or Lys, and Yaa may be Pro. Amino acid amides and methyl esters are also readily hydrolyzed, but rates on arylamides are exceedingly low.. The catalysed reaction is Release of an N-terminal amino acid, preferentially leucine, but not glutamic or aspartic acids.. Functionally, presumably involved in the processing and regular turnover of intracellular proteins. Catalyzes the removal of unsubstituted N-terminal amino acids from various peptides. This Xanthomonas axonopodis pv. citri (strain 306) protein is Probable cytosol aminopeptidase.